Consider the following 440-residue polypeptide: Transposon Ty1-A Gag polyprotein (440 aa).

Polar residues-rich tracts occupy residues 1–23 (MESQ…SVTS), 48–60 (TKAN…TPAS), 71–93 (SPQT…MMTQ), and 127–152 (QSQF…GNTF). Disordered stretches follow at residues 1-93 (MESQ…MMTQ), 126-173 (PQSQ…RPPP), and 352-440 (GSRN…PETY). A compositionally biased stretch (low complexity) spans 153–165 (TDSSSADSDMTST). The tract at residues 299 to 401 (NNGIHINNKV…NSKSKTARAH (103 aa)) is RNA-binding. Low complexity predominate over residues 402 to 418 (NVSTSNNSPSTDNDSIS). S416 is modified (phosphoserine). Residues 419-428 (KSTTEPIQLN) show a composition bias toward polar residues. Residues 429–440 (NKHDLHLRPETY) show a composition bias toward basic and acidic residues.

Homotrimer.

Its subcellular location is the cytoplasm. Capsid protein (CA) is the structural component of the virus-like particle (VLP), forming the shell that encapsulates the retrotransposons dimeric RNA genome. The particles are assembled from trimer-clustered units and there are holes in the capsid shells that allow for the diffusion of macromolecules. CA also has nucleocapsid-like chaperone activity, promoting primer tRNA(i)-Met annealing to the multipartite primer-binding site (PBS), dimerization of Ty1 RNA and initiation of reverse transcription. In Saccharomyces cerevisiae (strain ATCC 204508 / S288c) (Baker's yeast), this protein is Transposon Ty1-A Gag polyprotein (TY1A-A).